The following is a 130-amino-acid chain: GYLYHPAYYYGAGASTQFKNQDAIGNYNFGYNEGHATGGTFRREFGDALGNVKVGSYGLTDADGRRRVVTYKADASGFNANVHTNEPGTDSSKDPANTLVNKAVLPTTYYGGYYPGHYYGHYAPYHYGYY.

In terms of domain architecture, Chitin-binding type R&amp;R spans 24–90 (IGNYNFGYNE…NVHTNEPGTD (67 aa)).

This Limulus polyphemus (Atlantic horseshoe crab) protein is Cuticle protein 14 isoform a.